The chain runs to 62 residues: DCPSDWSSYEGHCYRVFKPPKDWADAERFCSQQAKGGHLVSIERFGREDFVSNLITKNLQRG.

Cys-2 and Cys-13 are oxidised to a cystine. Residues Tyr-9–Gly-62 enclose the C-type lectin domain.

Belongs to the snaclec family. As to quaternary structure, heterodimer; disulfide-linked. In terms of tissue distribution, expressed by the venom gland.

The protein resides in the secreted. Functionally, snaclec that binds to von Willebrand factor (VWF) and induces its interaction with GPIbalpha (GP1BA) (via the vWF A1 domain), resulting in platelet aggregation. Intramuscular and intravenous injections in mice induce a dose-dependent drop in platelet count (thrombocytopenia). Pretreatment by intravenous injection by this protein in mice potentiates the hemorrhagic lesion in the skin provoked by the metalloproteinase BaP1 intradermally injected. This result is not observed when both BaP1 and this protein are injected simultaneously. This Bothrops asper (Terciopelo) protein is Snaclec aspercetin subunit beta.